Here is a 355-residue protein sequence, read N- to C-terminus: Phytoene synthase (355 aa).

It belongs to the phytoene/squalene synthase family. ATP is required as a cofactor. Mn(2+) serves as cofactor. Requires Mg(2+) as cofactor.

It functions in the pathway carotenoid biosynthesis; phytoene biosynthesis. In terms of biological role, involved in the biosynthesis of carotenoids. Catalyzes the condensation of two molecules of geranylgeranyl diphosphate (GGPP) to give prephytoene diphosphate (PPPP) and the subsequent rearrangement of the cyclopropylcarbinyl intermediate to yield phytoene. The sequence is that of Phytoene synthase (crtB) from Cereibacter sphaeroides (strain ATCC 17023 / DSM 158 / JCM 6121 / CCUG 31486 / LMG 2827 / NBRC 12203 / NCIMB 8253 / ATH 2.4.1.) (Rhodobacter sphaeroides).